Reading from the N-terminus, the 374-residue chain is tRNA (guanine(26)-N(2))-dimethyltransferase (374 aa).

The Trm1 methyltransferase domain occupies 4-371; that stretch reads IEIREGKASL…KEIDEIVNCI (368 aa). S-adenosyl-L-methionine is bound by residues arginine 44, arginine 69, aspartate 87, aspartate 113, and alanine 114. 4 residues coordinate Zn(2+): cysteine 244, cysteine 247, cysteine 261, and cysteine 264.

Belongs to the class I-like SAM-binding methyltransferase superfamily. Trm1 family.

The enzyme catalyses guanosine(26) in tRNA + 2 S-adenosyl-L-methionine = N(2)-dimethylguanosine(26) in tRNA + 2 S-adenosyl-L-homocysteine + 2 H(+). Functionally, dimethylates a single guanine residue at position 26 of a number of tRNAs using S-adenosyl-L-methionine as donor of the methyl groups. The protein is tRNA (guanine(26)-N(2))-dimethyltransferase of Sulfurisphaera tokodaii (strain DSM 16993 / JCM 10545 / NBRC 100140 / 7) (Sulfolobus tokodaii).